Reading from the N-terminus, the 84-residue chain is ATP synthase subunit c (84 aa).

2 consecutive transmembrane segments (helical) span residues 9–29 (IFGS…GFSL) and 54–74 (IVAG…LLFI).

The protein belongs to the ATPase C chain family. As to quaternary structure, F-type ATPases have 2 components, F(1) - the catalytic core - and F(0) - the membrane proton channel. F(1) has five subunits: alpha(3), beta(3), gamma(1), delta(1), epsilon(1). F(0) has three main subunits: a(1), b(2) and c(10-14). The alpha and beta chains form an alternating ring which encloses part of the gamma chain. F(1) is attached to F(0) by a central stalk formed by the gamma and epsilon chains, while a peripheral stalk is formed by the delta and b chains.

It localises to the cell inner membrane. In terms of biological role, f(1)F(0) ATP synthase produces ATP from ADP in the presence of a proton or sodium gradient. F-type ATPases consist of two structural domains, F(1) containing the extramembraneous catalytic core and F(0) containing the membrane proton channel, linked together by a central stalk and a peripheral stalk. During catalysis, ATP synthesis in the catalytic domain of F(1) is coupled via a rotary mechanism of the central stalk subunits to proton translocation. Key component of the F(0) channel; it plays a direct role in translocation across the membrane. A homomeric c-ring of between 10-14 subunits forms the central stalk rotor element with the F(1) delta and epsilon subunits. This is ATP synthase subunit c from Histophilus somni (strain 2336) (Haemophilus somnus).